We begin with the raw amino-acid sequence, 87 residues long: Acyl-CoA-binding protein (87 aa).

The region spanning 2–87 (VSQLFEEKAK…VDQLIAKYSS (86 aa)) is the ACB domain. An acyl-CoA-binding positions include 29–33 (YALYK), Lys51, and Lys55. Lys51 is covalently cross-linked (Glycyl lysine isopeptide (Lys-Gly) (interchain with G-Cter in ubiquitin)). Residue Lys72 forms a Glycyl lysine isopeptide (Lys-Gly) (interchain with G-Cter in ubiquitin) linkage. An acyl-CoA is bound at residue Tyr74.

It belongs to the ACBP family.

Binds medium- and long-chain acyl-CoA esters with very high affinity and may function as an intracellular carrier of acyl-CoA esters. Enhances the in vitro activity of the ceramide synthase complex. The chain is Acyl-CoA-binding protein (ACB1) from Saccharomyces cerevisiae (strain ATCC 204508 / S288c) (Baker's yeast).